A 225-amino-acid polypeptide reads, in one-letter code: UPF0758 protein Ssed_0385 (225 aa).

The MPN domain occupies 102–224 (ILSDPDLTRD…IVSFAERGWI (123 aa)). Residues His-173, His-175, and Asp-186 each coordinate Zn(2+). A JAMM motif motif is present at residues 173 to 186 (HNHPSGVAEPSLAD).

The protein belongs to the UPF0758 family.

The sequence is that of UPF0758 protein Ssed_0385 from Shewanella sediminis (strain HAW-EB3).